A 967-amino-acid polypeptide reads, in one-letter code: Muscular LMNA-interacting protein (967 aa).

Ser129 bears the Phosphoserine mark. Disordered regions lie at residues 132–154 (EDEATCRQGEQGPPGGPGNIATR), 302–336 (GLASEAQKKMSTSNVLNPKEDVRTCPAPASGASLT), 432–462 (QKVKQTPPTSKKSLSSGSLTTGSTEQEHQAS), 506–628 (GSTL…SASH), 644–685 (QTLQ…TPSL), 786–838 (SMHS…SQLT), and 929–967 (FSVRDEQEKSPTLLSQDTYNKLGHPMVTIPEHDTLDSKE). Residues 144 to 811 (PPGGPGNIAT…GSETIKTPTT (668 aa)) form a required for interaction with ISL1 region. Positions 437 to 455 (TPPTSKKSLSSGSLTTGST) are enriched in low complexity. Over residues 508–523 (TLRSNTTSPQPQTDTF) the composition is skewed to polar residues. Residues 528–541 (VPSVTPVLSPLSSS) are compositionally biased toward low complexity. The span at 543–556 (GRKDGDSRTPEKNR) shows a compositional bias: basic and acidic residues. Polar residues-rich tracts occupy residues 558-567 (ICIQPSTLAS) and 658-685 (GSATCPSRTQMPENTASNHSSRVSTPSL). Ser792 is modified (phosphoserine). The span at 800–811 (MLGSETIKTPTT) shows a compositional bias: polar residues. Over residues 826-835 (SSSSSTASES) the composition is skewed to low complexity. Residues 938-947 (SPTLLSQDTY) are compositionally biased toward polar residues. The segment covering 958 to 967 (PEHDTLDSKE) has biased composition (basic and acidic residues).

As to quaternary structure, directly interacts with LMNA. Interacts with ISL1 (via N-terminal domain); the interaction represses ISL1 transactivator activity. Interactions of ISL1 with MLIP1 and GCN5/KAT2A may be mutually exclusive. May be ubiquitinated by UBE3C ubiquitin ligase; ubiquitination is followed by protein degradation. In terms of tissue distribution, predominantly expressed in the heart and skeletal muscle, but detected at lower levels in the lung and brain (at protein level). Also detected in smooth muscle, thymus and kidney. In brain, expressed by a subpopulation of cells within the hippocampus and cortex. In heart, expressed by cardiomyocytes. Expression is reduced in hypertrophic hearts at the transcript level. However, expression in hypertrophic hearts induced by transverse aortic constriction do not differ from control at the protein level.

It is found in the nucleus. Its subcellular location is the nucleus envelope. It localises to the PML body. The protein resides in the cytoplasm. The protein localises to the cytosol. It is found in the cell membrane. Its subcellular location is the sarcolemma. Functionally, required for myoblast differentiation into myotubes, possibly acting as a transcriptional regulator of the myogenic program. Required for cardiac adaptation to stress through integrated regulation of the AKT/mTOR pathways and FOXO1. Regulates cardiac homeostasis and plays a role in the protection against cardiac hypertrophy. Binds chromatin. May act as a transcriptional cofactor for ISL1, repressing its transcriptional activity. May also repress MYOCD transcriptional activity. The chain is Muscular LMNA-interacting protein from Mus musculus (Mouse).